The primary structure comprises 406 residues: MTPARHFSARLRTVFEGVGHWALSTQAGLKPSRLLPQQASPRLLSVSCADLAKRQELPGKKPLSEKKLKRYFVDYRRVLVCGGNGGAGASCFHSEPRKEFGGPDGGDGGNGGHVILRADQQVKSLSSVLSRYQGFSGEDGGSKNCFGRSGAVLYIRVPMGTLVKEGGRVVADLSRVGDEYIAALGGAGGKGNRFFLANNNRAPVTCTPGQPGQQRVLHLELKTVAHAGMVGFPNAGKSSLLRAISNARPAVASYPFTTLKPHVGIVHYEGHLQIAVADIPGIIRGAHQNRGLGSAFLRHIERCRFLLFVVDLSQPEPWTQVDDLKYELEMYEKGLSERPHAIIANKIDLPEAQANLSQLRDHLGQEVIVLSALTGENLEQLLLHLKVLYDAYTEAELGQGRQPLRW.

Residues 15–406 (FEGVGHWALS…LGQGRQPLRW (392 aa)) are localized in the mitochondria. The not localized in the mitochondria stretch occupies residues 30 to 406 (KPSRLLPQQA…LGQGRQPLRW (377 aa)). An Obg domain is found at 70–224 (RYFVDYRRVL…RVLHLELKTV (155 aa)). One can recognise an OBG-type G domain in the interval 225-390 (AHAGMVGFPN…LLLHLKVLYD (166 aa)). GTP is bound by residues 231-238 (GFPNAGKS), 256-260 (FTTLK), 278-281 (DIPG), 345-348 (NKID), and 371-373 (SAL). Ser-238 and Thr-258 together coordinate Mg(2+).

The protein belongs to the TRAFAC class OBG-HflX-like GTPase superfamily. OBG GTPase family. Associates with the mitochondrial ribosome large subunit; the association occurs in a GTP-dependent manner. Mg(2+) is required as a cofactor.

The protein localises to the mitochondrion. It localises to the mitochondrion inner membrane. Plays a role in the regulation of the mitochondrial ribosome assembly and of translational activity. Displays GTPase activity. Involved in the ribosome maturation process. The sequence is that of Mitochondrial ribosome-associated GTPase 2 (MTG2) from Pongo abelii (Sumatran orangutan).